The sequence spans 501 residues: MDGVADLVVIALLGALTLLTAGHVLALRSRSRAVAAQAQQWADRIRADAENAARSHQDRLLAEAAAYRAELDRREQRIAAQEQRIERELRRLDAARRQLDERTAQLDQRAAELARLAEERRAVLEQAAALTAEEAKAALVADIVDQAKREAAVLVRAIERDARTNGEARARRIISLAIQRLAGEQTSESVVRAVPLPEEAMKGRIIGREGRNIRAFETVTGVDLIVDDTPGVVLLSCFHPLRRETARLTLEKLVADGRINPHRIEEAYEASRREVEQQCVRAGEDALLEVGISDMHPELVALLGQLRYRTSYGQNVLAHLVESAHLAGMMAAELGADVPLAKRCALLHDIGKALTHEVEGSHAVIGAQLARRYGECEEVAHAIEAHHNEVEARTVEAVLTQAADAISGGRPGARRASMESYVKRLQRMEEIAYAVSDGVEKVFVMQAGREIRVMVQPEAVDDVQAQVIARDIAKRVEEELTYPGQVRVTVIRESRAVETAR.

A helical transmembrane segment spans residues 7–27 (LVVIALLGALTLLTAGHVLAL). In terms of domain architecture, KH spans 190-256 (VVRAVPLPEE…RLTLEKLVAD (67 aa)). The HD domain maps to 316-409 (VLAHLVESAH…TQAADAISGG (94 aa)).

Belongs to the RNase Y family.

The protein localises to the cell membrane. Functionally, endoribonuclease that initiates mRNA decay. The polypeptide is Ribonuclease Y (Thermobifida fusca (strain YX)).